Reading from the N-terminus, the 1331-residue chain is DNA-directed RNA polymerase subunit beta' (1331 aa).

Residues Cys60, Cys62, Cys75, and Cys78 each coordinate Zn(2+). Asp535, Asp537, and Asp539 together coordinate Mg(2+). Positions 902, 979, 986, and 989 each coordinate Zn(2+).

Belongs to the RNA polymerase beta' chain family. In terms of assembly, the RNAP catalytic core consists of 2 alpha, 1 beta, 1 beta' and 1 omega subunit. When a sigma factor is associated with the core the holoenzyme is formed, which can initiate transcription. Requires Mg(2+) as cofactor. Zn(2+) serves as cofactor.

It catalyses the reaction RNA(n) + a ribonucleoside 5'-triphosphate = RNA(n+1) + diphosphate. In terms of biological role, DNA-dependent RNA polymerase catalyzes the transcription of DNA into RNA using the four ribonucleoside triphosphates as substrates. This is DNA-directed RNA polymerase subunit beta' from Corynebacterium aurimucosum (strain ATCC 700975 / DSM 44827 / CIP 107346 / CN-1) (Corynebacterium nigricans).